Consider the following 313-residue polypeptide: 2-phosphoglycerate kinase (313 aa).

The ATP-cone domain maps to 8 to 95 (SRILVTDKEY…LWRRVLKKHS (88 aa)).

Belongs to the 2-phosphoglycerate kinase family. A divalent metal cation serves as cofactor.

It catalyses the reaction (2R)-2-phosphoglycerate + ATP = (2R)-2,3-bisphosphoglycerate + ADP + H(+). Its pathway is thermoadapter biosynthesis; cyclic 2,3-diphosphoglycerate biosynthesis; cyclic 2,3-diphosphoglycerate from 2-phospho-D-glycerate: step 1/2. In terms of biological role, catalyzes the phosphorylation of 2-phosphoglycerate to 2,3-diphosphoglycerate. Involved in the biosynthesis of cyclic 2,3-bisphosphoglycerate, a thermoprotectant. This chain is 2-phosphoglycerate kinase, found in Methanococcus maripaludis (strain C6 / ATCC BAA-1332).